The chain runs to 358 residues: 5,10-methenyltetrahydromethanopterin hydrogenase (358 aa).

This sequence belongs to the HMD family. Homotetramer.

The enzyme catalyses 5,10-methenyl-5,6,7,8-tetrahydromethanopterin + H2 = 5,10-methylenetetrahydromethanopterin + H(+). It participates in one-carbon metabolism; methanogenesis from CO(2); 5,10-methylene-5,6,7,8-tetrahydromethanopterin from 5,10-methenyl-5,6,7,8-tetrahydromethanopterin (hydrogen route): step 1/1. Activity requires salt; 100 mM potassium phosphate, potassium chloride, and sodium chloride are equally effective. Functionally, catalyzes the reversible reduction of methenyl-H(4)MPT(+) to methylene-H(4)MPT. The sequence is that of 5,10-methenyltetrahydromethanopterin hydrogenase from Methanopyrus kandleri (strain AV19 / DSM 6324 / JCM 9639 / NBRC 100938).